Here is a 337-residue protein sequence, read N- to C-terminus: ATP-dependent 6-phosphofructokinase (337 aa).

An ATP-binding site is contributed by Gly11. 21-25 (RAVVR) is a binding site for ADP. Residues 72–73 (RY) and 102–105 (GDGS) contribute to the ATP site. Asp103 lines the Mg(2+) pocket. Position 125–127 (125–127 (TID)) interacts with substrate. The Proton acceptor role is filled by Asp127. Arg154 provides a ligand contact to ADP. Residues Arg162 and 169–171 (MGR) contribute to the substrate site. Residues 185–187 (GAD), Arg212, and 214–216 (KNH) each bind ADP. Residues Glu223, Arg245, and 251-254 (HILR) each bind substrate.

This sequence belongs to the phosphofructokinase type A (PFKA) family. ATP-dependent PFK group I subfamily. Prokaryotic clade 'B1' sub-subfamily. As to quaternary structure, homotetramer. It depends on Mg(2+) as a cofactor.

Its subcellular location is the cytoplasm. The enzyme catalyses beta-D-fructose 6-phosphate + ATP = beta-D-fructose 1,6-bisphosphate + ADP + H(+). It participates in carbohydrate degradation; glycolysis; D-glyceraldehyde 3-phosphate and glycerone phosphate from D-glucose: step 3/4. With respect to regulation, allosterically activated by ADP and other diphosphonucleosides, and allosterically inhibited by phosphoenolpyruvate. Its function is as follows. Catalyzes the phosphorylation of D-fructose 6-phosphate to fructose 1,6-bisphosphate by ATP, the first committing step of glycolysis. In Streptococcus equi subsp. equi (strain 4047), this protein is ATP-dependent 6-phosphofructokinase.